Consider the following 279-residue polypeptide: NAD kinase (279 aa).

Catalysis depends on D57, which acts as the Proton acceptor. Residues 57-58 (DG), 133-134 (NE), R159, D161, and 172-177 (TAYNKS) each bind NAD(+).

It belongs to the NAD kinase family. A divalent metal cation is required as a cofactor.

The protein localises to the cytoplasm. The catalysed reaction is NAD(+) + ATP = ADP + NADP(+) + H(+). In terms of biological role, involved in the regulation of the intracellular balance of NAD and NADP, and is a key enzyme in the biosynthesis of NADP. Catalyzes specifically the phosphorylation on 2'-hydroxyl of the adenosine moiety of NAD to yield NADP. This is NAD kinase from Streptococcus pyogenes serotype M2 (strain MGAS10270).